Consider the following 441-residue polypeptide: Mannose-6-phosphate isomerase (441 aa).

Gln111, His113, Glu138, and His285 together coordinate Zn(2+). Arg304 is an active-site residue.

The protein belongs to the mannose-6-phosphate isomerase type 1 family. Monomer. Zn(2+) serves as cofactor.

It is found in the cytoplasm. The enzyme catalyses D-mannose 6-phosphate = D-fructose 6-phosphate. Its pathway is nucleotide-sugar biosynthesis; GDP-alpha-D-mannose biosynthesis; alpha-D-mannose 1-phosphate from D-fructose 6-phosphate: step 1/2. Its function is as follows. Involved in the synthesis of the GDP-mannose and dolichol-phosphate-mannose required for a number of critical mannosyl transfer reactions. The chain is Mannose-6-phosphate isomerase (PMI1) from Candida albicans (strain SC5314 / ATCC MYA-2876) (Yeast).